The sequence spans 275 residues: Nitrogenase iron protein 1 (275 aa).

An ATP-binding site is contributed by 9-16; the sequence is GKGGIGKS. Residue Cys-97 participates in [4Fe-4S] cluster binding. At Arg-100 the chain carries ADP-ribosylarginine; by dinitrogenase reductase ADP-ribosyltransferase. Cys-132 contributes to the [4Fe-4S] cluster binding site.

Belongs to the NifH/BchL/ChlL family. Homodimer. The cofactor is [4Fe-4S] cluster. Post-translationally, the reversible ADP-ribosylation of Arg-100 inactivates the nitrogenase reductase and regulates nitrogenase activity.

The enzyme catalyses N2 + 8 reduced [2Fe-2S]-[ferredoxin] + 16 ATP + 16 H2O = H2 + 8 oxidized [2Fe-2S]-[ferredoxin] + 2 NH4(+) + 16 ADP + 16 phosphate + 6 H(+). The key enzymatic reactions in nitrogen fixation are catalyzed by the nitrogenase complex, which has 2 components: the iron protein and the molybdenum-iron protein. This is Nitrogenase iron protein 1 (nifH1) from Methanosarcina barkeri.